We begin with the raw amino-acid sequence, 3075 residues long: Lovastatin nonaketide synthase mokA (3075 aa).

Residues Asn-49–Glu-488 enclose the Ketosynthase family 3 (KS3) domain. Active-site for beta-ketoacyl synthase activity residues include Cys-222, His-361, and His-408. The tract at residues Val-603 to Pro-945 is acyl and malonyl transferase. Catalysis depends on Ser-697, which acts as the For malonyltransferase activity. The N-terminal hotdog fold stretch occupies residues His-997–Gly-1133. Residues His-997 to Ser-1311 enclose the PKS/mFAS DH domain. The Proton acceptor; for dehydratase activity role is filled by His-1029. Residues His-1029–Gly-1041 are dehydratase-like. Residues Met-1156–Ser-1311 are C-terminal hotdog fold. Asp-1218 serves as the catalytic Proton donor; for dehydratase activity. Residues Tyr-1556–Thr-1594 are methyltransferase. Residues Ala-2176–Ala-2470 form a beta-ketoacyl reductase region. A Carrier domain is found at Asp-2492 to Leu-2571. Ser-2531 is subject to O-(pantetheine 4'-phosphoryl)serine. The interval Ser-2582 to Asn-2624 is disordered. Over residues Asn-2591–Ser-2611 the composition is skewed to polar residues. The span at Ser-2612–Asn-2624 shows a compositional bias: acidic residues. Residues Pro-2633 to Phe-2989 are peptide synthetase elongation.

Pantetheine 4'-phosphate is required as a cofactor.

It carries out the reaction holo-[lovastatin nonaketide synthase] + 9 malonyl-CoA + S-adenosyl-L-methionine + 11 NADPH + 19 H(+) = dihydromonacolin L-[lovastatin nonaketide synthase] + S-adenosyl-L-homocysteine + 9 CO2 + 11 NADP(+) + 9 CoA + 6 H2O. It functions in the pathway polyketide biosynthesis; lovastatin biosynthesis. Nonaketide synthase; part of the gene cluster that mediates the biosynthesis of monakolin K, also known as lovastatin, and which acts as a potent competitive inhibitor of HMG-CoA reductase. Monakolin K biosynthesis is performed in two stages. The first stage is catalyzed by the nonaketide synthase mokA, which belongs to type I polyketide synthases and catalyzes the iterative nine-step formation of the polyketide. This PKS stage is completed by the action of dehydrogenase mokE, which catalyzes the NADPH-dependent reduction of the unsaturated tetra-, penta- and heptaketide intermediates that arise during the mokA-mediated biosynthesis of the nonaketide chain and leads to dihydromonacolin L. Covalently bound dihydromonacolin L is released from mokA by the mokD esterase. Conversion of dihydromonacolin L into monacolin L and then monacolin J is subsequently performed with the participation of molecular oxygen and P450 monoogygenase mokC. Finally, mokF performs the conversion of monacoline J to monacoline K through the addition of the side-chain diketide moiety (2R)-2-methylbutanoate produced by the diketide synthase mokB. The polypeptide is Lovastatin nonaketide synthase mokA (Monascus pilosus (Red mold)).